We begin with the raw amino-acid sequence, 2554 residues long: DnaJ homolog subfamily C GRV2 (2554 aa).

Disordered regions lie at residues 746 to 766 (DVVD…KRLL) and 810 to 833 (QRRA…GVDS). The segment covering 815 to 825 (DSSSEASNPQA) has biased composition (polar residues). Coiled coils occupy residues 925–951 (TRQE…EDIS) and 1518–1546 (RTAS…LKRQ). The region spanning 1524–1606 (LNEEISNISK…AQCILYRRYG (83 aa)) is the J domain. Disordered stretches follow at residues 1960-1994 (IEDR…SSEG) and 2339-2366 (SGEV…GQTP). The span at 1966–1977 (SNDTPELQSSVA) shows a compositional bias: polar residues. The span at 1982-1994 (IEEHSDHQPSSEG) shows a compositional bias: basic and acidic residues. Polar residues predominate over residues 2352–2366 (VNESTDPSSLPGQTP).

As to expression, constitutively expressed in roots, hypocotyls, leaves (e.g. vascular tissues), stems, flowers (e.g. petals and stigmas), siliques and pollen.

Its subcellular location is the endosome membrane. Functionally, required for endosome formation, vacuolar protein sorting and determination of the embryo growth axis. Necessary for the transport of proteins into protein storage vacuoles (PSVs). Participates in vesicle trafficking from the endosome to the central vacuole. Involved in the regulation of shoot phototropism and gravitropism, probably through the positioning of specialized amyloplasts (statoliths) in endodermal cells. In Arabidopsis thaliana (Mouse-ear cress), this protein is DnaJ homolog subfamily C GRV2 (GRV2).